Reading from the N-terminus, the 500-residue chain is L-arabinose isomerase (500 aa).

4 residues coordinate Mn(2+): glutamate 306, glutamate 333, histidine 350, and histidine 450.

This sequence belongs to the arabinose isomerase family. In terms of assembly, homohexamer. It depends on Mn(2+) as a cofactor.

It catalyses the reaction beta-L-arabinopyranose = L-ribulose. Its pathway is carbohydrate degradation; L-arabinose degradation via L-ribulose; D-xylulose 5-phosphate from L-arabinose (bacterial route): step 1/3. Its function is as follows. Catalyzes the conversion of L-arabinose to L-ribulose. The protein is L-arabinose isomerase of Shigella boydii serotype 18 (strain CDC 3083-94 / BS512).